The primary structure comprises 559 residues: T-complex protein 1 subunit gamma (559 aa).

An intrachain disulfide couples Cys368 to Cys374. The disordered stretch occupies residues 531–559 (KDKRGGAGQRGGDRGQGDQEETFGDQRDG).

The protein belongs to the TCP-1 chaperonin family. Heterooligomeric complex of about 850 to 900 kDa that forms two stacked rings, 12 to 16 nm in diameter.

It is found in the cytoplasm. Functionally, molecular chaperone; assists the folding of proteins upon ATP hydrolysis. Known to play a role, in vitro, in the folding of actin and tubulin. This is T-complex protein 1 subunit gamma from Oxytricha granulifera (Ciliate).